A 174-amino-acid polypeptide reads, in one-letter code: Probable inosine/xanthosine triphosphatase (174 aa).

Aspartate 63 lines the Mg(2+) pocket.

Belongs to the YjjX NTPase family. In terms of assembly, homodimer. The cofactor is Mg(2+). Mn(2+) serves as cofactor.

The catalysed reaction is XTP + H2O = XDP + phosphate + H(+). It catalyses the reaction ITP + H2O = IDP + phosphate + H(+). Its function is as follows. Phosphatase that hydrolyzes non-canonical purine nucleotides such as XTP and ITP to their respective diphosphate derivatives. Probably excludes non-canonical purines from DNA/RNA precursor pool, thus preventing their incorporation into DNA/RNA and avoiding chromosomal lesions. The polypeptide is Probable inosine/xanthosine triphosphatase (Methanocella arvoryzae (strain DSM 22066 / NBRC 105507 / MRE50)).